The following is a 386-amino-acid chain: Succinate--CoA ligase [ADP-forming] subunit beta (386 aa).

Residues 9–244 (KAVLRSYGVS…LDEEDSKEIE (236 aa)) enclose the ATP-grasp domain. ATP is bound by residues lysine 46, 53–55 (GRG), glutamate 99, cysteine 102, and glutamate 107. Residues asparagine 199 and aspartate 213 each coordinate Mg(2+). Residues asparagine 264 and 321–323 (GIM) each bind substrate.

The protein belongs to the succinate/malate CoA ligase beta subunit family. Heterotetramer of two alpha and two beta subunits. It depends on Mg(2+) as a cofactor.

It carries out the reaction succinate + ATP + CoA = succinyl-CoA + ADP + phosphate. The catalysed reaction is GTP + succinate + CoA = succinyl-CoA + GDP + phosphate. It functions in the pathway carbohydrate metabolism; tricarboxylic acid cycle; succinate from succinyl-CoA (ligase route): step 1/1. Functionally, succinyl-CoA synthetase functions in the citric acid cycle (TCA), coupling the hydrolysis of succinyl-CoA to the synthesis of either ATP or GTP and thus represents the only step of substrate-level phosphorylation in the TCA. The beta subunit provides nucleotide specificity of the enzyme and binds the substrate succinate, while the binding sites for coenzyme A and phosphate are found in the alpha subunit. The chain is Succinate--CoA ligase [ADP-forming] subunit beta from Bacillus cereus (strain G9842).